A 199-amino-acid polypeptide reads, in one-letter code: MIKLIVGLGNPGAEYTATRHNAGFWLIDQLAREAGATLRDERRFHGFYAKARLYGEEVHLLEPQTYMNRSGQSVVALAHFFKILPDQILVAHDELDLPPGTVKLKLGGGSGGHNGLKDISAHLSSQQYWRLRIGIGHPRDLIPESARAGAKPDVANFVLKPPRREEQDVIDAAIERALAVMPMVVKGELDRATMQLHRN.

Tyr15 is a tRNA binding site. His20 serves as the catalytic Proton acceptor. TRNA-binding residues include Tyr66, Asn68, and Asn114.

This sequence belongs to the PTH family. Monomer.

The protein localises to the cytoplasm. The enzyme catalyses an N-acyl-L-alpha-aminoacyl-tRNA + H2O = an N-acyl-L-amino acid + a tRNA + H(+). In terms of biological role, hydrolyzes ribosome-free peptidyl-tRNAs (with 1 or more amino acids incorporated), which drop off the ribosome during protein synthesis, or as a result of ribosome stalling. Functionally, catalyzes the release of premature peptidyl moieties from peptidyl-tRNA molecules trapped in stalled 50S ribosomal subunits, and thus maintains levels of free tRNAs and 50S ribosomes. The polypeptide is Peptidyl-tRNA hydrolase (Burkholderia multivorans (strain ATCC 17616 / 249)).